The following is a 399-amino-acid chain: Exodeoxyribonuclease 7 large subunit (399 aa).

The protein belongs to the XseA family. As to quaternary structure, heterooligomer composed of large and small subunits.

Its subcellular location is the cytoplasm. It carries out the reaction Exonucleolytic cleavage in either 5'- to 3'- or 3'- to 5'-direction to yield nucleoside 5'-phosphates.. Its function is as follows. Bidirectionally degrades single-stranded DNA into large acid-insoluble oligonucleotides, which are then degraded further into small acid-soluble oligonucleotides. The polypeptide is Exodeoxyribonuclease 7 large subunit (Clostridium acetobutylicum (strain ATCC 824 / DSM 792 / JCM 1419 / IAM 19013 / LMG 5710 / NBRC 13948 / NRRL B-527 / VKM B-1787 / 2291 / W)).